The primary structure comprises 232 residues: uncharacterized protein (232 aa).

2 disordered regions span residues 123 to 147 (VAGGKHSSNRRPRGTIRAVPGRKYP) and 169 to 200 (AAADPQERVGPRGRRGLAGQQQCRGRPGPSLR).

Belongs to the mycobacterial PPE family.

This is an uncharacterized protein from Mycobacterium tuberculosis (strain ATCC 25618 / H37Rv).